The sequence spans 445 residues: Phosphoglucosamine mutase (445 aa).

S99 functions as the Phosphoserine intermediate in the catalytic mechanism. Mg(2+) contacts are provided by S99, D242, D244, and D246. S99 bears the Phosphoserine mark.

The protein belongs to the phosphohexose mutase family. Requires Mg(2+) as cofactor. Post-translationally, activated by phosphorylation.

It carries out the reaction alpha-D-glucosamine 1-phosphate = D-glucosamine 6-phosphate. Functionally, catalyzes the conversion of glucosamine-6-phosphate to glucosamine-1-phosphate. The chain is Phosphoglucosamine mutase from Helicobacter pylori (strain G27).